A 155-amino-acid polypeptide reads, in one-letter code: MIDLGISKIALIGAVALIVIGPEKLPRLARTVGTLLGKAQRYVNDVKQEVNRSMELDEFKKMKESVEDAARDVENSIRTGASDFEKSWSETTGSTSSDALPGFEAFPEYRNPKKKWRLKRGATPQWFKARSGIRTKAQSGAARVARFRPQPSRKA.

A helical transmembrane segment spans residues 1 to 21 (MIDLGISKIALIGAVALIVIG). Disordered stretches follow at residues 81 to 103 (ASDF…LPGF) and 131 to 155 (SGIR…SRKA). Polar residues predominate over residues 89–98 (SETTGSTSSD).

The protein belongs to the TatB family. As to quaternary structure, the Tat system comprises two distinct complexes: a TatABC complex, containing multiple copies of TatA, TatB and TatC subunits, and a separate TatA complex, containing only TatA subunits. Substrates initially bind to the TatABC complex, which probably triggers association of the separate TatA complex to form the active translocon.

Its subcellular location is the cell inner membrane. Its function is as follows. Part of the twin-arginine translocation (Tat) system that transports large folded proteins containing a characteristic twin-arginine motif in their signal peptide across membranes. Together with TatC, TatB is part of a receptor directly interacting with Tat signal peptides. TatB may form an oligomeric binding site that transiently accommodates folded Tat precursor proteins before their translocation. This is Sec-independent protein translocase protein TatB from Polaromonas naphthalenivorans (strain CJ2).